Consider the following 327-residue polypeptide: RNA ligase 1 (327 aa).

It depends on Mg(2+) as a cofactor. Requires Mn(2+) as cofactor. AMPylates itself (auto-AMPylation).

The catalysed reaction is ATP + (ribonucleotide)n-3'-hydroxyl + 5'-phospho-(ribonucleotide)m = (ribonucleotide)n+m + AMP + diphosphate.. Functions as an RNA ligase, in vitro. The ligation reaction entails three nucleotidyl transfer steps. In the first step, the RNA ligase reacts with ATP in the absence of nucleic acid to form a covalent ligase-AMP intermediate and release pyrophosphate. In step 2, the ligase-AMP binds to the nucleic acid and transfers the adenylate to the 5'-PO4 terminus to form an adenylylated intermediate. In step 3, the RNA ligase directs the attack of the 3'-OH on the 5'-phosphoanhydride linkage, resulting in a repaired 3'-5' phosphodiester and release of AMP. Exhibits selectivity for single-stranded RNA substrates and may not have nick-sealing activity on double-stranded DNA-RNA hybrids. May play a role in maintaining RNA integrity under stress conditions, for example in response to reactive oxygen species (ROS). The polypeptide is RNA ligase 1 (Mus musculus (Mouse)).